The chain runs to 227 residues: Prolactin-4A1 (227 aa).

An N-terminal signal peptide occupies residues Met-1–Ala-31. Intrachain disulfides connect Cys-87-Cys-203 and Cys-220-Cys-227. The N-linked (GlcNAc...) asparagine glycan is linked to Asn-175.

Belongs to the somatotropin/prolactin family. As to expression, expressed specifically in placenta. Expressed in both trophoblast giant cells and spongiotrophoblast cells.

It localises to the secreted. This Mus musculus (Mouse) protein is Prolactin-4A1 (Prl4a1).